Reading from the N-terminus, the 544-residue chain is MAAKNIKYNEDARKKIHKGVKTLAEAVKVTLGPKGRHVVIDKSFGSPQVTKDGVTVAKEIELEDKHENMGAQMVKEVASKTADKAGDGTTTATVLAEAIYSEGLRNVTAGANPMDLKRGIDKAVKVVVDEIKKISKPVQHHKEIAQVATISANNDAEIGNLIAEAMEKVGKNGSITVEEAKGFETVLDVVEGMNFNRGYLSSYFTTNPETQECVLEESLVLIYDKKISGIKDFLPVLQQVAESGRPLLIIAEDIEGEALATLVVNRLRAGFRVCAVKAPGFGDRRKAMLEDIAILTGGQLISEELGMKLENTTLSMLGKAKKVIVSKEDTTIVEGLGNKEDIEARCENIKKQIEDSTSDYDKEKLQERLAKLSGGVAVIRVGAATEIEMKEKKDRVDDAQHATLAAVEEGILPGGGTALVRCIPTLEAFIPILTNEDEQIGARIVLKALSAPLKQIAANAGKEGAIICQQVLARSSNEGYDALRDAYTDMIEAGILDPTKVTRCALESAASVAGLLLTTEALIADIPEDKSSSAPAMPGAGMDY.

ATP-binding positions include 30–33, lysine 51, 87–91, glycine 415, 481–483, and aspartate 497; these read TLGP, DGTTT, and DAL.

This sequence belongs to the chaperonin (HSP60) family. Forms a cylinder of 14 subunits composed of two heptameric rings stacked back-to-back. Interacts with the co-chaperonin GroES.

The protein localises to the cytoplasm. It catalyses the reaction ATP + H2O + a folded polypeptide = ADP + phosphate + an unfolded polypeptide.. In terms of biological role, together with its co-chaperonin GroES, plays an essential role in assisting protein folding. The GroEL-GroES system forms a nano-cage that allows encapsulation of the non-native substrate proteins and provides a physical environment optimized to promote and accelerate protein folding. The polypeptide is Chaperonin GroEL (Chlamydia felis (strain Fe/C-56) (Chlamydophila felis)).